The chain runs to 930 residues: uncharacterized protein (930 aa).

The signal sequence occupies residues 1–20 (MPSFVLWTFHLCSQWFQGLT). N-linked (GlcNAc...) asparagine glycosylation is found at Asn-137, Asn-146, Asn-164, Asn-210, Asn-257, Asn-628, Asn-717, and Asn-799.

Its subcellular location is the secreted. This is an uncharacterized protein from Arthroderma benhamiae (strain ATCC MYA-4681 / CBS 112371) (Trichophyton mentagrophytes).